Reading from the N-terminus, the 97-residue chain is Putative defensin-like protein 237 (97 aa).

Residues M1–G23 form the signal peptide. 4 disulfide bridges follow: C30–C94, C40–C71, C48–C84, and C69–C86.

The protein belongs to the DEFL family.

The protein resides in the secreted. The sequence is that of Putative defensin-like protein 237 (SCRL21) from Arabidopsis thaliana (Mouse-ear cress).